The chain runs to 907 residues: Protein translocase subunit SecA (907 aa).

ATP-binding positions include Q87, 105 to 109 (GEGKT), and D510. 4 residues coordinate Zn(2+): C892, C894, C903, and H904.

Belongs to the SecA family. In terms of assembly, monomer and homodimer. Part of the essential Sec protein translocation apparatus which comprises SecA, SecYEG and auxiliary proteins SecDF-YajC and YidC. Requires Zn(2+) as cofactor.

It localises to the cell inner membrane. The protein localises to the cytoplasm. It catalyses the reaction ATP + H2O + cellular proteinSide 1 = ADP + phosphate + cellular proteinSide 2.. In terms of biological role, part of the Sec protein translocase complex. Interacts with the SecYEG preprotein conducting channel. Has a central role in coupling the hydrolysis of ATP to the transfer of proteins into and across the cell membrane, serving both as a receptor for the preprotein-SecB complex and as an ATP-driven molecular motor driving the stepwise translocation of polypeptide chains across the membrane. The sequence is that of Protein translocase subunit SecA from Acinetobacter baumannii (strain ACICU).